The sequence spans 148 residues: uncharacterized protein (148 aa).

An N-terminal signal peptide occupies residues 1–19; that stretch reads MLSNAKLLLSLAMASTALG. 2 N-linked (GlcNAc...) asparagine glycosylation sites follow: N41 and N59. Residue N127 is the site of GPI-anchor amidated asparagine attachment. A propeptide spans 128-148 (removed in mature form); the sequence is AANARAIPGALGLAGAVMMLL.

The protein belongs to the SED1 family. Post-translationally, the GPI-anchor is attached to the protein in the endoplasmic reticulum and serves to target the protein to the cell surface. There, the glucosamine-inositol phospholipid moiety is cleaved off and the GPI-modified mannoprotein is covalently attached via its lipidless GPI glycan remnant to the 1,6-beta-glucan of the outer cell wall layer.

Its subcellular location is the secreted. The protein localises to the cell wall. The protein resides in the membrane. Its function is as follows. Cell wall protein that plays a role in adaptation and resistance to cell wall stress. This is an uncharacterized protein from Saccharomyces cerevisiae (strain ATCC 204508 / S288c) (Baker's yeast).